The chain runs to 168 residues: Sperm acrosome-associated protein 9 (168 aa).

Microtubule inner protein component of sperm flagellar doublet microtubules. Interacts with CABP1 and CALR. Interacts with INCA1. Interacts with microtubules. Expressed in sperm (at protein level). Expressed from almost all the cell types of testis, with abundant expression in round and elongated spermatids (at protein level). Predominantly expressed in tissues containing motile cilia.

It localises to the cytoplasm. Its subcellular location is the cytoplasmic vesicle. It is found in the secretory vesicle. The protein localises to the acrosome. The protein resides in the cytoskeleton. It localises to the cilium basal body. Its subcellular location is the flagellum axoneme. It is found in the cilium axoneme. The protein localises to the nucleus. Its function is as follows. Microtubule inner protein (MIP) part of the dynein-decorated doublet microtubules (DMTs) of multiciliated respiratory cells and the distal singlet microtubules of monoflagellated spermatozoa. Forms an extensive interaction network cross-linking the lumen of axonemal doublet microtubules. The protein is Sperm acrosome-associated protein 9 of Mus musculus (Mouse).